A 484-amino-acid polypeptide reads, in one-letter code: Glycogen synthase (484 aa).

Lys15 contacts ADP-alpha-D-glucose.

The protein belongs to the glycosyltransferase 1 family. Bacterial/plant glycogen synthase subfamily.

It carries out the reaction [(1-&gt;4)-alpha-D-glucosyl](n) + ADP-alpha-D-glucose = [(1-&gt;4)-alpha-D-glucosyl](n+1) + ADP + H(+). It participates in glycan biosynthesis; glycogen biosynthesis. In terms of biological role, synthesizes alpha-1,4-glucan chains using ADP-glucose. The protein is Glycogen synthase of Geotalea uraniireducens (strain Rf4) (Geobacter uraniireducens).